Consider the following 201-residue polypeptide: Small ribosomal subunit protein uS4 (201 aa).

An S4 RNA-binding domain is found at 93 to 155; it reads CRLDNIVYRM…SKSLSMFEVN (63 aa).

The protein belongs to the universal ribosomal protein uS4 family. Part of the 30S ribosomal subunit. Contacts protein S5. The interaction surface between S4 and S5 is involved in control of translational fidelity.

In terms of biological role, one of the primary rRNA binding proteins, it binds directly to 16S rRNA where it nucleates assembly of the body of the 30S subunit. Functionally, with S5 and S12 plays an important role in translational accuracy. The sequence is that of Small ribosomal subunit protein uS4 from Elusimicrobium minutum (strain Pei191).